Here is a 148-residue protein sequence, read N- to C-terminus: Lysozyme C (148 aa).

The signal sequence occupies residues 1 to 18 (MKAVIILGLVLLSVTVQG). Positions 19–148 (KIFERCELAR…VSQYVQGCGV (130 aa)) constitute a C-type lysozyme domain. Disulfide bonds link C24/C146, C48/C134, C83/C99, and C95/C113. Active-site residues include E53 and D71.

Belongs to the glycosyl hydrolase 22 family. Monomer.

It localises to the secreted. It carries out the reaction Hydrolysis of (1-&gt;4)-beta-linkages between N-acetylmuramic acid and N-acetyl-D-glucosamine residues in a peptidoglycan and between N-acetyl-D-glucosamine residues in chitodextrins.. Functionally, lysozymes have primarily a bacteriolytic function; those in tissues and body fluids are associated with the monocyte-macrophage system and enhance the activity of immunoagents. The protein is Lysozyme C (LYZ) of Papio anubis (Olive baboon).